We begin with the raw amino-acid sequence, 143 residues long: Large ribosomal subunit protein uL11 (143 aa).

The protein belongs to the universal ribosomal protein uL11 family. In terms of assembly, part of the ribosomal stalk of the 50S ribosomal subunit. Interacts with L10 and the large rRNA to form the base of the stalk. L10 forms an elongated spine to which L12 dimers bind in a sequential fashion forming a multimeric L10(L12)X complex. One or more lysine residues are methylated.

Forms part of the ribosomal stalk which helps the ribosome interact with GTP-bound translation factors. In Albidiferax ferrireducens (strain ATCC BAA-621 / DSM 15236 / T118) (Rhodoferax ferrireducens), this protein is Large ribosomal subunit protein uL11.